We begin with the raw amino-acid sequence, 205 residues long: Holliday junction branch migration complex subunit RuvA (205 aa).

The domain I stretch occupies residues 1-65 (MIAKLKGILD…EDRIHLFGFL (65 aa)). Residues 66-144 (DNTEKVAFNM…NINTIANNTS (79 aa)) are domain II. Residues 145-153 (LATLSTDSN) form a flexible linker region. Positions 154–205 (THDNILSDAITALIALGISRAEATQILSDIYALSPSISVNELVRTALQRRAK) are domain III.

It belongs to the RuvA family. As to quaternary structure, homotetramer. Forms an RuvA(8)-RuvB(12)-Holliday junction (HJ) complex. HJ DNA is sandwiched between 2 RuvA tetramers; dsDNA enters through RuvA and exits via RuvB. An RuvB hexamer assembles on each DNA strand where it exits the tetramer. Each RuvB hexamer is contacted by two RuvA subunits (via domain III) on 2 adjacent RuvB subunits; this complex drives branch migration. In the full resolvosome a probable DNA-RuvA(4)-RuvB(12)-RuvC(2) complex forms which resolves the HJ.

The protein resides in the cytoplasm. In terms of biological role, the RuvA-RuvB-RuvC complex processes Holliday junction (HJ) DNA during genetic recombination and DNA repair, while the RuvA-RuvB complex plays an important role in the rescue of blocked DNA replication forks via replication fork reversal (RFR). RuvA specifically binds to HJ cruciform DNA, conferring on it an open structure. The RuvB hexamer acts as an ATP-dependent pump, pulling dsDNA into and through the RuvAB complex. HJ branch migration allows RuvC to scan DNA until it finds its consensus sequence, where it cleaves and resolves the cruciform DNA. This Orientia tsutsugamushi (strain Ikeda) (Rickettsia tsutsugamushi) protein is Holliday junction branch migration complex subunit RuvA.